Reading from the N-terminus, the 361-residue chain is SUN domain-containing protein 3 (361 aa).

Over 1 to 47 (MSGKAKARRAAMFFRGCSEDASGSTSGSTLLSEDENPDTNGVTRSWK) the chain is Nuclear. The disordered stretch occupies residues 19-38 (EDASGSTSGSTLLSEDENPD). Over residues 22–31 (SGSTSGSTLL) the composition is skewed to low complexity. The chain crosses the membrane as a helical span at residues 48-69 (IILSTMFTLTFLLVGLLSHQWL). The Perinuclear space portion of the chain corresponds to 70-361 (KETEVPQKSR…RVHGTPGKHI (292 aa)). The stretch at 103 to 129 (KEQLELLKKESQTLENNFHKILLLIEQ) forms a coiled coil. An SUN domain is found at 197–358 (GASIIEAGTS…YRFRVHGTPG (162 aa)).

Self-associates. Interacts with SYNE1 and SPAG4/SUN4. Proposed to form a spermatogenesis-specific LINC complex with SYNE1 during sperm head formation possibly implicating a SUN domain-based heterotrimer with SPAG4/SUN4 associating with SYNE1.

It is found in the membrane. The protein resides in the nucleus envelope. The protein localises to the nucleus inner membrane. In terms of biological role, as a probable component of the LINC (LInker of Nucleoskeleton and Cytoskeleton) complex, involved in the connection between the nuclear lamina and the cytoskeleton. The nucleocytoplasmic interactions established by the LINC complex play an important role in the transmission of mechanical forces across the nuclear envelope and in nuclear movement and positioning. May be involved in nuclear remodeling during sperm head formation in spermatogenesis. A probable SUN3:SYNE1 LINC complex may tether spermatid nuclei to posterior cytoskeletal structures such as the manchette. The chain is SUN domain-containing protein 3 (SUN3) from Macaca fascicularis (Crab-eating macaque).